Here is a 156-residue protein sequence, read N- to C-terminus: Snaclec A3 (156 aa).

The signal sequence occupies residues 1–23; the sequence is MGRSISVSFGLLVVFLSLSGTGA. Disulfide bonds link Cys27/Cys38, Cys55/Cys154, and Cys129/Cys146. The C-type lectin domain maps to 34-155; sequence HEGHCYKVFN…CGQPYRFTCE (122 aa).

This sequence belongs to the snaclec family. As to quaternary structure, heterodimer; disulfide-linked. Expressed by the venom gland.

The protein resides in the secreted. Its function is as follows. Interferes with one step of hemostasis (modulation of platelet aggregation, or coagulation cascade, for example). This Macrovipera lebetinus (Levantine viper) protein is Snaclec A3.